A 213-amino-acid polypeptide reads, in one-letter code: MAGAMTMSRRRLSHALLLVLAILPNLAALAVAAGGGSGGGGFFPHRSLLQSSSCQPSGAITGTSGDCNADNGSECCQDGVQYMTYACSPPVAAGGTGTAALLTLNSFADGGDGGGAPSCTGRFYDDGQLVVALSTGWFDGRSRCEKDVVIRASGGASVTAMVVDECDSQRGCDSDHNFEPPCRNNIVDGSPAVWDALGLNKDDGEAQITWSDA.

Residues 1–32 (MAGAMTMSRRRLSHALLLVLAILPNLAALAVA) form the signal peptide.

Belongs to the kiwellin family.

Its subcellular location is the secreted. In Oryza sativa subsp. japonica (Rice), this protein is Ripening-related protein 3.